Consider the following 414-residue polypeptide: Serine hydroxymethyltransferase (414 aa).

(6S)-5,6,7,8-tetrahydrofolate is bound by residues leucine 118 and 122–124 (GHL). Lysine 227 carries the post-translational modification N6-(pyridoxal phosphate)lysine. Residues glutamate 240 and 350–352 (SPF) each bind (6S)-5,6,7,8-tetrahydrofolate.

The protein belongs to the SHMT family. In terms of assembly, homodimer. The cofactor is pyridoxal 5'-phosphate.

Its subcellular location is the cytoplasm. The catalysed reaction is (6R)-5,10-methylene-5,6,7,8-tetrahydrofolate + glycine + H2O = (6S)-5,6,7,8-tetrahydrofolate + L-serine. Its pathway is one-carbon metabolism; tetrahydrofolate interconversion. The protein operates within amino-acid biosynthesis; glycine biosynthesis; glycine from L-serine: step 1/1. Its function is as follows. Catalyzes the reversible interconversion of serine and glycine with tetrahydrofolate (THF) serving as the one-carbon carrier. This reaction serves as the major source of one-carbon groups required for the biosynthesis of purines, thymidylate, methionine, and other important biomolecules. Also exhibits THF-independent aldolase activity toward beta-hydroxyamino acids, producing glycine and aldehydes, via a retro-aldol mechanism. This chain is Serine hydroxymethyltransferase, found in Bacillus cereus (strain ZK / E33L).